Here is a 650-residue protein sequence, read N- to C-terminus: Flap endonuclease 1 (650 aa).

The interval 1–106 (MGIKGLTKFI…SELEKRGEKR (106 aa)) is N-domain. Asp34 serves as a coordination point for Mg(2+). Residues Arg47 and Arg72 each coordinate DNA. The Mg(2+) site is built by Asp88, Glu160, Glu162, Asp181, and Asp183. Residues 124–266 (EIKKQSGRTV…KTAYNLIKEY (143 aa)) form an I-domain region. Glu160 contributes to the DNA binding site. DNA contacts are provided by Gly244 and Asp246. Asp246 is a Mg(2+) binding site. Residues 349–357 (TQRRLDNFF) are interaction with PCNA. Positions 371-592 (ETKKEQTLPA…NSYNNIKNNN (222 aa)) are disordered. Basic and acidic residues-rich tracts occupy residues 413-469 (MKEE…KKSL), 478-502 (DSDKESESGNIIKNEKQNMDDEKIN), and 511-524 (DHSRIRHTENKDNI). Low complexity predominate over residues 525–562 (SDINNNNNNNNNNSSSNNNNISNNHFNSVSSNSTFNSS). Residues 565–581 (LKSEDTLKSNSPLKEDS) are compositionally biased toward basic and acidic residues. Low complexity predominate over residues 582–592 (PNSYNNIKNNN).

Belongs to the XPG/RAD2 endonuclease family. FEN1 subfamily. In terms of assembly, interacts with PCNA1 and PCNA2. Three molecules of FEN1 bind to one PCNA trimer with each molecule binding to one PCNA monomer. PCNA stimulates the nuclease activity without altering cleavage specificity. Mg(2+) serves as cofactor. Phosphorylated. Phosphorylation upon DNA damage induces relocalization to the nuclear plasma.

The protein localises to the nucleus. The protein resides in the nucleolus. It localises to the nucleoplasm. Its subcellular location is the mitochondrion. With respect to regulation, inhibited by monovalent metal ions. In terms of biological role, structure-specific nuclease with 5'-flap endonuclease and 5'-3' exonuclease activities involved in DNA replication and repair. During DNA replication, cleaves the 5'-overhanging flap structure that is generated by displacement synthesis when DNA polymerase encounters the 5'-end of a downstream Okazaki fragment. It enters the flap from the 5'-end and then tracks to cleave the flap base, leaving a nick for ligation. Also involved in the long patch base excision repair (LP-BER) pathway, by cleaving within the apurinic/apyrimidinic (AP) site-terminated flap. Acts as a genome stabilization factor that prevents flaps from equilibrating into structures that lead to duplications and deletions. Also possesses 5'-3' exonuclease activity on nicked or gapped double-stranded DNA, and exhibits RNase H activity. Also involved in replication and repair of rDNA and in repairing mitochondrial DNA. This chain is Flap endonuclease 1, found in Plasmodium falciparum.